A 328-amino-acid chain; its full sequence is uncharacterized protein (328 aa).

Belongs to the Gfo/Idh/MocA family.

This is an uncharacterized protein from Escherichia coli (strain K12).